The chain runs to 350 residues: Ion-translocating oxidoreductase complex subunit D (350 aa).

Transmembrane regions (helical) follow at residues Ile-20–Gly-40, Gly-42–Leu-62, Pro-68–Ser-88, Ile-89–Ala-109, and Pro-123–Leu-143. Thr-187 carries the post-translational modification FMN phosphoryl threonine. 5 helical membrane-spanning segments follow: residues Leu-215–Leu-235, Ile-244–Gly-264, Leu-267–Leu-287, Leu-301–Pro-321, and Asp-322–Thr-342.

Belongs to the NqrB/RnfD family. The complex is composed of six subunits: RnfA, RnfB, RnfC, RnfD, RnfE and RnfG. FMN serves as cofactor.

It is found in the cell inner membrane. Part of a membrane-bound complex that couples electron transfer with translocation of ions across the membrane. In Citrobacter koseri (strain ATCC BAA-895 / CDC 4225-83 / SGSC4696), this protein is Ion-translocating oxidoreductase complex subunit D.